Reading from the N-terminus, the 256-residue chain is Ribosomal RNA small subunit methyltransferase A (256 aa).

The S-adenosyl-L-methionine site is built by Asn12, Leu14, Gly39, Glu60, Asp85, and Asn103.

The protein belongs to the class I-like SAM-binding methyltransferase superfamily. rRNA adenine N(6)-methyltransferase family. RsmA subfamily.

It localises to the cytoplasm. It catalyses the reaction adenosine(1518)/adenosine(1519) in 16S rRNA + 4 S-adenosyl-L-methionine = N(6)-dimethyladenosine(1518)/N(6)-dimethyladenosine(1519) in 16S rRNA + 4 S-adenosyl-L-homocysteine + 4 H(+). Specifically dimethylates two adjacent adenosines (A1518 and A1519) in the loop of a conserved hairpin near the 3'-end of 16S rRNA in the 30S particle. May play a critical role in biogenesis of 30S subunits. The sequence is that of Ribosomal RNA small subunit methyltransferase A from Legionella pneumophila (strain Corby).